The primary structure comprises 76 residues: Cytochrome c oxidase subunit 6C-1 (76 aa).

The Mitochondrial matrix portion of the chain corresponds to 4–14; it reads GALLPKPQMHD. Residues 15–55 form a helical membrane-spanning segment; sequence PLSKRLWVHIVGAFIVDLGVAAAHKFGAAKPRKKAYADFYR. Over 56 to 76 the chain is Mitochondrial intermembrane; the sequence is NHDPMKDFDEMRKAGVFRSVK.

It belongs to the cytochrome c oxidase subunit 6c family. In terms of assembly, component of the cytochrome c oxidase (complex IV, CIV), a multisubunit enzyme composed of 14 subunits. The complex is composed of a catalytic core of 3 subunits MT-CO1, MT-CO2 and MT-CO3, encoded in the mitochondrial DNA, and 11 supernumerary subunits COX4I, COX5A, COX5B, COX6A, COX6B, COX6C, COX7A, COX7B, COX7C, COX8 and NDUFA4, which are encoded in the nuclear genome. The complex exists as a monomer or a dimer and forms supercomplexes (SCs) in the inner mitochondrial membrane with NADH-ubiquinone oxidoreductase (complex I, CI) and ubiquinol-cytochrome c oxidoreductase (cytochrome b-c1 complex, complex III, CIII), resulting in different assemblies (supercomplex SCI(1)III(2)IV(1) and megacomplex MCI(2)III(2)IV(2)).

The protein localises to the mitochondrion inner membrane. It participates in energy metabolism; oxidative phosphorylation. Functionally, component of the cytochrome c oxidase, the last enzyme in the mitochondrial electron transport chain which drives oxidative phosphorylation. The respiratory chain contains 3 multisubunit complexes succinate dehydrogenase (complex II, CII), ubiquinol-cytochrome c oxidoreductase (cytochrome b-c1 complex, complex III, CIII) and cytochrome c oxidase (complex IV, CIV), that cooperate to transfer electrons derived from NADH and succinate to molecular oxygen, creating an electrochemical gradient over the inner membrane that drives transmembrane transport and the ATP synthase. Cytochrome c oxidase is the component of the respiratory chain that catalyzes the reduction of oxygen to water. Electrons originating from reduced cytochrome c in the intermembrane space (IMS) are transferred via the dinuclear copper A center (CU(A)) of subunit 2 and heme A of subunit 1 to the active site in subunit 1, a binuclear center (BNC) formed by heme A3 and copper B (CU(B)). The BNC reduces molecular oxygen to 2 water molecules using 4 electrons from cytochrome c in the IMS and 4 protons from the mitochondrial matrix. In Rattus norvegicus (Rat), this protein is Cytochrome c oxidase subunit 6C-1 (Cox6c1).